The primary structure comprises 788 residues: Probable potassium transporter 9 (788 aa).

Topologically, residues 1 to 21 (MDPEFGRGMAPRKREPWRTTL) are cytoplasmic. Residues 22 to 42 (LLAYQSLGVVYGDLSISPLYV) traverse the membrane as a helical segment. Residues 43–59 (YKSTFAEDITHSESNEE) lie on the Extracellular side of the membrane. A helical membrane pass occupies residues 60-80 (IFGVLSFVFWTLTLIPLIKYV). Residues 81–151 (SIVLRADDNG…EKHKTLQTAL (71 aa)) are Cytoplasmic-facing. Residues 152–172 (LIMVMIGTCMVIGDGVLTPAI) form a helical membrane-spanning segment. Over 173–191 (SVFSAVSGLELSLSRDQHE) the chain is Extracellular. A helical transmembrane segment spans residues 192 to 212 (YAVIPITCVILVFLFALQHYG). Residues 213 to 215 (THR) are Cytoplasmic-facing. Residues 216 to 236 (VGFLFAPIVLAWLICMSMLGL) form a helical membrane-spanning segment. Over 237–264 (YNIIHWNPQVYRALNPYYMLKFLRKTKK) the chain is Extracellular. A helical membrane pass occupies residues 265–285 (SGWMSLGGILLCMTGSEAMFA). Residues 286-292 (DLGHFSY) are Cytoplasmic-facing. The helical transmembrane segment at 293 to 313 (SAIQLAFTTLVYPALILGYMG) threads the bilayer. Over 314 to 343 (QAAYLSKHHTLNSTYQIGYYISVPESVRWP) the chain is Extracellular. Residue N325 is glycosylated (N-linked (GlcNAc...) asparagine). The chain crosses the membrane as a helical span at residues 344–364 (VLVLAILASVVGSQAIISGTF). Residues 365 to 391 (SIINQSQSLSCFPRVKVVHTSENIHGQ) are Cytoplasmic-facing. A helical membrane pass occupies residues 392–412 (IYIPEINWLLMVLCIAVTVGF). The Extracellular segment spans residues 413–422 (RDTKHMGNAS). An N-linked (GlcNAc...) asparagine glycan is attached at N420. The chain crosses the membrane as a helical span at residues 423–443 (GLAVITVMLVTTCLTSLVIML). Topologically, residues 444–451 (CWHRSPAL) are cytoplasmic. A helical membrane pass occupies residues 452 to 472 (ALVFFLFFGSIEVLYFSASLI). Over 473 to 476 (KFRE) the chain is Extracellular. Residues 477-497 (GAWLPIMLALILMAVMFIWHH) traverse the membrane as a helical segment. Topologically, residues 498–788 (TTIKKYEFDL…LLEVGMVYVL (291 aa)) are cytoplasmic.

This sequence belongs to the HAK/KUP transporter (TC 2.A.72.3) family.

It localises to the membrane. In terms of biological role, high-affinity potassium transporter. The protein is Probable potassium transporter 9 (HAK9) of Oryza sativa subsp. japonica (Rice).